The chain runs to 289 residues: NFU1 iron-sulfur cluster scaffold homolog, mitochondrial (289 aa).

The transit peptide at 1 to 56 (MAKLISYAKGGFLRNTRLTSRAVPQVYQHATSSRGFVHLTSSVAQSSAIHVSTPST) directs the protein to the mitochondrion. A nifU region spans residues 183–251 (IKELLDTRIR…IPEVESVEQV (69 aa)). Positions 220 and 223 each coordinate [4Fe-4S] cluster. Positions 267–289 (ERNLKQKDTSSTAPVGIGGGPAN) are disordered.

Belongs to the NifU family.

Its subcellular location is the mitochondrion. Molecular scaffold for [Fe-S] cluster assembly of mitochondrial iron-sulfur proteins. This chain is NFU1 iron-sulfur cluster scaffold homolog, mitochondrial, found in Drosophila willistoni (Fruit fly).